The following is a 135-amino-acid chain: uncharacterized protein (135 aa).

This is an uncharacterized protein from Methanocaldococcus jannaschii (strain ATCC 43067 / DSM 2661 / JAL-1 / JCM 10045 / NBRC 100440) (Methanococcus jannaschii).